Reading from the N-terminus, the 194-residue chain is 7-methyl-GTP pyrophosphatase (194 aa).

Asp69 functions as the Proton acceptor in the catalytic mechanism.

This sequence belongs to the Maf family. YceF subfamily. A divalent metal cation serves as cofactor.

The protein resides in the cytoplasm. It carries out the reaction N(7)-methyl-GTP + H2O = N(7)-methyl-GMP + diphosphate + H(+). Its function is as follows. Nucleoside triphosphate pyrophosphatase that hydrolyzes 7-methyl-GTP (m(7)GTP). May have a dual role in cell division arrest and in preventing the incorporation of modified nucleotides into cellular nucleic acids. In Salmonella choleraesuis (strain SC-B67), this protein is 7-methyl-GTP pyrophosphatase (yceF1).